The following is a 100-amino-acid chain: Apolipoprotein C-II (100 aa).

The signal sequence occupies residues 1–22; sequence MGSRFLLALFLVLLVLGCEVQA. A lipid binding region spans residues 66–74; the sequence is SVDEKLRDM. Positions 78-100 are lipoprotein lipase cofactor; it reads SSAAMTTYASIFTDQIFTLLKGE.

Belongs to the apolipoprotein C2 family. In terms of processing, proapolipoprotein C-II is synthesized as a sialic acid containing glycoprotein which is subsequently desialylated prior to its proteolytic processing. Post-translationally, proapolipoprotein C-II, the major form found in plasma undergoes proteolytic cleavage of its N-terminal hexapeptide to generate the mature form apolipoprotein C-II, which occurs as the minor form in plasma.

Its subcellular location is the secreted. Component of chylomicrons, very low-density lipoproteins (VLDL), low-density lipoproteins (LDL), and high-density lipoproteins (HDL) in plasma. Plays an important role in lipoprotein metabolism as an activator of lipoprotein lipase. The sequence is that of Apolipoprotein C-II (APOC2) from Bramus lutescens (Transcaucasian mole vole).